The following is a 1096-amino-acid chain: Centrosome-associated zinc finger protein Cp190 (1096 aa).

An involved in microtubule and centrosome binding region spans residues 1 to 209 (MGEVKSVKVD…GDSSNVKQEP (209 aa)). In terms of domain architecture, BTB spans 30–97 (CDLTLQFRDN…MYTGTLEFEL (68 aa)). The segment at 126 to 308 (MENVNRQQRP…PQGTQTQLEH (183 aa)) is disordered. 2 stretches are compositionally biased toward polar residues: residues 175 to 213 (RANTQRGSTGNTMSRTSGGSNRSPYGDSSNVKQEPTSPF) and 220 to 230 (YNNNKRPAQTS). Phosphoserine is present on residues S197 and S211. The interval 207–271 (QEPTSPFEQL…GDNDPEYDGG (65 aa)) is nuclear localization. The involved in interaction with cliff stretch occupies residues 210 to 245 (TSPFEQLRKGYNNNKRPAQTSLLSPPSKKPSLEEVK). A Phosphothreonine modification is found at T229. S233 carries the phosphoserine modification. Basic and acidic residues predominate over residues 239-252 (PSLEEVKEFAEQQR). Positions 245–468 (KEFAEQQRMR…IAQGAENTTG (224 aa)) are centrosomal targeting M domain involved in interaction with ZIPIC. Residues 292 to 305 (STSKQQSPQGTQTQ) show a composition bias toward low complexity. Phosphoserine is present on residues S298 and S319. The tract at residues 309–390 (GSTTIILKQD…KPPANQSSAT (82 aa)) is involved in interaction with cliff. The tract at residues 366–449 (NTPAAPTEKS…ANTAAAQKRR (84 aa)) is disordered. The centrosomal localization and interaction with microtubules stretch occupies residues 385–508 (NQSSATTSPH…KETIDPALCE (124 aa)). Over residues 412 to 445 (AQQKAASSQQKSGTSQTTGNQGTGANPPANTAAA) the composition is skewed to low complexity. C2H2-type zinc fingers lie at residues 538-561 (AECALCNQSYRTKGELEAHINEVH) and 567-590 (QQCIYCNKVFEQELQLYRHMKSYH). At T603 the chain carries Phosphothreonine. The segment covering 608–625 (LGSQDEEEEAEGDEEQEP) has biased composition (acidic residues). The segment at 608 to 630 (LGSQDEEEEAEGDEEQEPEQTGK) is disordered. Residues S610, S708, and S723 each carry the phosphoserine modification. The interval 710-733 (PEAEHVKQETDEKSLAGTEEEYDD) is disordered. Over residues 711–723 (EAEHVKQETDEKS) the composition is skewed to basic and acidic residues. T727 bears the Phosphothreonine mark. Phosphoserine occurs at positions 745, 748, 757, and 760. Positions 770–927 (LIAESEEQSN…EDSPIPHSDS (158 aa)) are disordered. Basic and acidic residues predominate over residues 777–799 (QSNKEPKSDKPRDDISEKLKELT). Residues 802-812 (WTEDENDDDVD) are compositionally biased toward acidic residues. Phosphothreonine is present on T817. Composition is skewed to basic and acidic residues over residues 825–834 (ANKDPEPTVH), 849–861 (KGPEEATEEKASE), 882–907 (EKMDVDSEAADEKASKAEVQIKKEAE), and 914–927 (EFIKEDSPIPHSDS). S920, S925, and S927 each carry phosphoserine. Phosphothreonine is present on T936. A Phosphoserine modification is found at S938. Composition is skewed to basic and acidic residues over residues 960–973 (IAEAEKPDQEKDIV) and 1011–1035 (AAEKAAENNEDTRTADEKEAVEDKP). The interval 960–1096 (IAEAEKPDQE…GVSAAAKEEL (137 aa)) is disordered. 2 positions are modified to phosphoserine: S1071 and S1074. The span at 1076 to 1086 (WGDDDEDEDEN) shows a compositional bias: acidic residues.

Homodimerizes via the N-terminal BTB domain. Component of the gypsy chromatin insulator complex, composed of Cp190, mod(mdg4) and su(Hw). The gypsy chromatin insulator complex interacts with Topors via mod(mdg4) and su(Hw). Interacts with Cp60. Interacts with inv. Interacts with Nup98. Interacts (via BTB domain) with pita (via region between the ZAD domain and the first zinc finger domain); the interaction is direct. Interacts with ZIPIC (via region between the ZAD domain and the first zinc finger domain); the interaction is direct. Interacts (via regions between the BTB domain and first zinc finger domain) with cliff (via regions flanking MADF domain 1); the interaction is probably direct. Associates (via N-terminus) with microtubules; the interaction is direct, is enhanced by dimerization and involves multiple regions within the N-terminus. Microtubule association is enriched at growing plus ends. Expressed in spermatids but not in mature spermatozoa. Localizes within the spermatids to a sheath of microtubules around the nucleus and to microtubules within the tail.

It is found in the nucleus. The protein localises to the cytoplasm. Its subcellular location is the cytoskeleton. The protein resides in the microtubule organizing center. It localises to the centrosome. It is found in the chromosome. The protein localises to the nucleoplasm. Functionally, plays a central role in chromatin domain organization and boundary function through recruitment by a range of insulator DNA-binding proteins, including ZIPIC, pita, CTCF, su(Hw), cliff and others. Together with pita and CTCF cooperatively binds to and regulates the activity of the Miscadastral pigmentation (MCP) insulator. Cooperatively recruited to the front-ultraabdominal (Fub) boundary by pita, su(Hw) and cliff. Recruitment of Cp190 together with Chro/chromator induces chromatin decondensation. Component of the gypsy chromatin insulator complex which is required for the function of the gypsy chromatin insulator and other endogenous chromatin insulators. Chromatin insulators are regulatory elements that establish independent domains of transcriptional activity within eukaryotic genomes. Insulators have two defining properties; they can block the communication between an enhancer and a promoter when placed between them and can also buffer transgenes from position effect variegation (PEV). Insulators are proposed to structure the chromatin fiber into independent domains of differing transcriptional potential by promoting the formation of distinct chromatin loops to form topologically associating domains (TADs). This chromatin looping may involve the formation of insulator bodies, where homotypic interactions between individual subunits of the insulator complex could promote the clustering of widely spaced insulators at the nuclear periphery. Within the gypsy insulator complex, this protein may directly bind to insulator DNA at sites distinct from those recognized by su(Hw). Required during embryogenesis for axial expansion, an actin/myosin dependent process that distributes the dividing nuclei along the anterior-posterior axis of the syncytial embryo. Associates with centrosomes and interphase microtubules during mitosis, and recruits CP60; may have a role in maintaining centrosome and spindle integrity. The sequence is that of Centrosome-associated zinc finger protein Cp190 from Drosophila melanogaster (Fruit fly).